A 920-amino-acid chain; its full sequence is Chitin synthase C (920 aa).

Disordered regions lie at residues 1–41 (MSYN…NAYQ) and 140–173 (IPML…SPAP). A compositionally biased stretch (acidic residues) spans 154-163 (YSDEYQVEEQ). 5 helical membrane-spanning segments follow: residues 466 to 486 (SAFG…FVAL), 564 to 584 (RWLN…YQIW), 608 to 628 (LFAW…TTYL), 640 to 660 (VLGV…FVLA), and 675 to 695 (MVYF…FVTV). Asparagine 715 carries N-linked (GlcNAc...) asparagine glycosylation. A run of 4 helical transmembrane segments spans residues 718-738 (FFTI…ASII), 749-769 (FIQY…YAFC), 847-867 (AVVL…LSAA), and 892-912 (VVLW…LWYL).

It belongs to the chitin synthase family. Class I subfamily.

It is found in the cell membrane. It carries out the reaction [(1-&gt;4)-N-acetyl-beta-D-glucosaminyl](n) + UDP-N-acetyl-alpha-D-glucosamine = [(1-&gt;4)-N-acetyl-beta-D-glucosaminyl](n+1) + UDP + H(+). Its function is as follows. Polymerizes chitin, a structural polymer of the cell wall and septum, by transferring the sugar moiety of UDP-GlcNAc to the non-reducing end of the growing chitin polymer. Involved in hyphal growth. The sequence is that of Chitin synthase C from Aspergillus oryzae (strain ATCC 42149 / RIB 40) (Yellow koji mold).